The sequence spans 1007 residues: SUPPRESSOR OF ABI3-5 (1007 aa).

2 disordered regions span residues methionine 1–glutamate 185 and glutamate 204–threonine 269. Basic and acidic residues-rich tracts occupy residues proline 40–valine 49, tyrosine 94–glycine 120, histidine 138–glutamate 185, and glutamate 204–arginine 214. Basic residues predominate over residues arginine 227 to arginine 236. Residues serine 237 to aspartate 264 are compositionally biased toward basic and acidic residues. One can recognise an RRM 1 domain in the interval alanine 272–proline 352. Residues valine 378–lysine 407 form a RanBP2-type zinc finger. The region spanning histidine 432–serine 512 is the RRM 2 domain. Disordered regions lie at residues glycine 556–glutamine 581, proline 631–lysine 656, histidine 725–glutamine 755, serine 771–glycine 797, alanine 810–threonine 910, and serine 945–aspartate 977. Over residues proline 631–aspartate 645 the composition is skewed to polar residues. Composition is skewed to low complexity over residues serine 778–glycine 793 and proline 823–serine 835. Over residues threonine 849–asparagine 867 the composition is skewed to basic and acidic residues. The G-patch domain maps to glutamate 928–lysine 974.

As to quaternary structure, interacts with the pre-spliceosomal component U2AF65A. In terms of tissue distribution, ubiquitous with highest expression in siliques toward the end of seed maturation.

Its subcellular location is the nucleus. In terms of biological role, splicing factor that controls alternative splicing of the developmental regulator ABI3. Reduces splicing of a cryptic intron in ABI3, leading to a decreased in ABI3-beta transcript. Regulates the splicing of the receptor-like kinase SNC4/LRKL-2.6. In Arabidopsis thaliana (Mouse-ear cress), this protein is SUPPRESSOR OF ABI3-5.